A 277-amino-acid polypeptide reads, in one-letter code: 4-hydroxy-3-methylbut-2-enyl diphosphate reductase (277 aa).

Residue cysteine 12 coordinates [4Fe-4S] cluster. (2E)-4-hydroxy-3-methylbut-2-enyl diphosphate contacts are provided by histidine 36 and histidine 70. Dimethylallyl diphosphate is bound by residues histidine 36 and histidine 70. Isopentenyl diphosphate is bound by residues histidine 36 and histidine 70. Cysteine 92 lines the [4Fe-4S] cluster pocket. Residue histidine 120 coordinates (2E)-4-hydroxy-3-methylbut-2-enyl diphosphate. Histidine 120 lines the dimethylallyl diphosphate pocket. Histidine 120 is an isopentenyl diphosphate binding site. Glutamate 122 (proton donor) is an active-site residue. A (2E)-4-hydroxy-3-methylbut-2-enyl diphosphate-binding site is contributed by threonine 158. Cysteine 186 serves as a coordination point for [4Fe-4S] cluster. (2E)-4-hydroxy-3-methylbut-2-enyl diphosphate is bound by residues serine 214, asparagine 216, and serine 258. Positions 214, 216, and 258 each coordinate dimethylallyl diphosphate. Residues serine 214, asparagine 216, and serine 258 each coordinate isopentenyl diphosphate.

The protein belongs to the IspH family. Requires [4Fe-4S] cluster as cofactor.

It carries out the reaction isopentenyl diphosphate + 2 oxidized [2Fe-2S]-[ferredoxin] + H2O = (2E)-4-hydroxy-3-methylbut-2-enyl diphosphate + 2 reduced [2Fe-2S]-[ferredoxin] + 2 H(+). It catalyses the reaction dimethylallyl diphosphate + 2 oxidized [2Fe-2S]-[ferredoxin] + H2O = (2E)-4-hydroxy-3-methylbut-2-enyl diphosphate + 2 reduced [2Fe-2S]-[ferredoxin] + 2 H(+). The protein operates within isoprenoid biosynthesis; dimethylallyl diphosphate biosynthesis; dimethylallyl diphosphate from (2E)-4-hydroxy-3-methylbutenyl diphosphate: step 1/1. It functions in the pathway isoprenoid biosynthesis; isopentenyl diphosphate biosynthesis via DXP pathway; isopentenyl diphosphate from 1-deoxy-D-xylulose 5-phosphate: step 6/6. Functionally, catalyzes the conversion of 1-hydroxy-2-methyl-2-(E)-butenyl 4-diphosphate (HMBPP) into a mixture of isopentenyl diphosphate (IPP) and dimethylallyl diphosphate (DMAPP). Acts in the terminal step of the DOXP/MEP pathway for isoprenoid precursor biosynthesis. This is 4-hydroxy-3-methylbut-2-enyl diphosphate reductase from Campylobacter jejuni subsp. jejuni serotype O:23/36 (strain 81-176).